The chain runs to 71 residues: MLLETDASRNKPSSYIPLCGSDNSCGGLWCPRKGGKYSCISMTCDIQEDCPKLVRCKDSPGPYCMEGFCTC.

Intrachain disulfides connect Cys-44-Cys-64, Cys-50-Cys-69, and Cys-56-Cys-71.

This sequence belongs to the DEFL family.

The sequence is that of Defensin-like protein 292 from Arabidopsis thaliana (Mouse-ear cress).